A 331-amino-acid chain; its full sequence is Nucleoporin Nup35 (331 aa).

2 disordered regions span residues 1 to 63 (MEPM…HELN) and 79 to 110 (AHTA…GLFD). Composition is skewed to polar residues over residues 8–20 (SPVN…QTQY), 35–56 (HKNT…SPGG), and 84–104 (GANS…TGPP). An RRM Nup35-type domain is found at 187–268 (RLSDFWVTIF…SRCTDRSVID (82 aa)).

This sequence belongs to the Nup35 family. Interacts with Nup154.

The protein localises to the nucleus. It is found in the nuclear pore complex. Functions as a component of the nuclear pore complex (NPC). May have a role in the organization of the inner nuclear membrane proteins at the nuclear envelope together with Nup154. This Drosophila melanogaster (Fruit fly) protein is Nucleoporin Nup35.